The sequence spans 304 residues: Thyroxine 5-deiodinase (304 aa).

A disordered region spans residues 1–22 (MPRQAASRLVVGEGEGPPGASG). Over 1–42 (MPRQAASRLVVGEGEGPPGASGPAATMLRSLLLHSLRLCAQT) the chain is Cytoplasmic. A helical; Signal-anchor for type II membrane protein membrane pass occupies residues 43–62 (ASCLVLFPRFLGTAFMLWLL). Topologically, residues 63–304 (DFLCIRKHFL…QLHGTRPRRL (242 aa)) are extracellular. The active site involves Sec-170. Residue Sec-170 is a non-standard amino acid, selenocysteine.

This sequence belongs to the iodothyronine deiodinase family. As to quaternary structure, monomer. Homodimer. May undergo minor heretodimerization with DIO1 and DIO2. In terms of tissue distribution, neonatal skin, placenta, skeletal muscle and cerebral cortex.

Its subcellular location is the cell membrane. It is found in the endosome membrane. It catalyses the reaction 3,3',5'-triiodo-L-thyronine + iodide + A + H(+) = L-thyroxine + AH2. It carries out the reaction 3,3'-diiodo-L-thyronine + iodide + A + H(+) = 3,3',5-triiodo-L-thyronine + AH2. The catalysed reaction is 3-iodo-L-thyronine + iodide + A + H(+) = 3,5-diiodo-L-thyronine + AH2. The enzyme catalyses L-thyronine + iodide + A + H(+) = 3-iodo-L-thyronine + AH2. It catalyses the reaction 3',5'-diiodo-L-thyronine + iodide + A + H(+) = 3,3',5'-triiodo-L-thyronine + AH2. It carries out the reaction 3'-iodo-L-thyronine + iodide + A + H(+) = 3,3'-diiodo-L-thyronine + AH2. The catalysed reaction is 3,3',5'-triiodothyronamine + iodide + A + H(+) = 3,3',5,5'-tetraiodothyronamine + AH2. The enzyme catalyses 3',5'-diiodothyronamine + iodide + A + H(+) = 3,3',5'-triiodothyronamine + AH2. It catalyses the reaction 3,3'-diiodothyronamine + iodide + A + H(+) = 3,3',5-triiodothyronamine + AH2. It carries out the reaction 3-iodothyronamine + iodide + A + H(+) = 3,5-diiodothyronamine + AH2. The catalysed reaction is 3'-iodothyronamine + iodide + A + H(+) = 3,3'-diiodothyronamine + AH2. The enzyme catalyses thyronamine + iodide + A + H(+) = 3-iodothyronamine + AH2. Plays a crucial role in the metabolism of thyroid hormones (TH) and has specific roles in TH activation and inactivation by deiodination. Catalyzes the deiodination of L-thyroxine (T4) to 3,3',5'-triiodothyronine (rT3), 3,5-diiodothyronine (3,5-T2) to 3-monoiodothyronine (3-T1), rT3 to 3',5'-diiodothyronine (3',5'-T2) and 3,3'-diiodothyronine (3,3'-T2) to 3'-monoiodothyronine (3'-T1) via inner-ring deiodination (IRD). Catalyzes the deiodination of 3,5,3'-triiodothyronine (T3) to 3,3'-diiodothyronine (3,3'-T2) via IRD. Catalyzes the deiodination of 3-T1 to L-thyronine (T0) via outer-ring deiodination (ORD). Catalyzes the tyrosyl ring deiodinations of T4AM (3,3',5,5'-tetraiodothyronamine), rT3AM (3,3',5'-triiodothyronamine), T3AM (3,5,3'-triiodothyronamine), 3,5-T2AM (3,5-diiodothyronamine), 3,3'-T2AM (3,3'-diiodothyronamine) and 3-T1AM (3-iodothyronamine). The chain is Thyroxine 5-deiodinase (Dio3) from Rattus norvegicus (Rat).